We begin with the raw amino-acid sequence, 232 residues long: LexA repressor (232 aa).

Residues 1–10 are compositionally biased toward polar residues; it reads MDDSNDSSSA. Positions 1-22 are disordered; that stretch reads MDDSNDSSSAGPDGRLHAVDPS. The H-T-H motif DNA-binding region spans 47 to 67; the sequence is IREIGDAVGLTSTSSVAHQLR. Residues serine 156 and lysine 193 each act as for autocatalytic cleavage activity in the active site.

Belongs to the peptidase S24 family. Homodimer.

The enzyme catalyses Hydrolysis of Ala-|-Gly bond in repressor LexA.. Its function is as follows. Represses a number of genes involved in the response to DNA damage (SOS response), including recA and lexA. In the presence of single-stranded DNA, RecA interacts with LexA causing an autocatalytic cleavage which disrupts the DNA-binding part of LexA, leading to derepression of the SOS regulon and eventually DNA repair. This chain is LexA repressor, found in Mycolicibacterium paratuberculosis (strain ATCC BAA-968 / K-10) (Mycobacterium paratuberculosis).